The following is a 428-amino-acid chain: Gamma-glutamyl phosphate reductase (428 aa).

It belongs to the gamma-glutamyl phosphate reductase family.

The protein localises to the cytoplasm. The enzyme catalyses L-glutamate 5-semialdehyde + phosphate + NADP(+) = L-glutamyl 5-phosphate + NADPH + H(+). Its pathway is amino-acid biosynthesis; L-proline biosynthesis; L-glutamate 5-semialdehyde from L-glutamate: step 2/2. Functionally, catalyzes the NADPH-dependent reduction of L-glutamate 5-phosphate into L-glutamate 5-semialdehyde and phosphate. The product spontaneously undergoes cyclization to form 1-pyrroline-5-carboxylate. This is Gamma-glutamyl phosphate reductase from Treponema pallidum (strain Nichols).